The primary structure comprises 1140 residues: DNA damage-binding protein 1 (1140 aa).

Belongs to the DDB1 family. Component of the UV-DDB complex which includes DDB1 and DDB2; the heterodimer dimerizes to give rise to a heterotetramer when bound to damaged DNA. The UV-DDB complex interacts with monoubiquitinated histone H2A and binds to XPC via the DDB2 subunit. Component of numerous DCX (DDB1-CUL4-X-box) E3 ubiquitin-protein ligase complexes which consist of a core of DDB1, CUL4A or CUL4B and RBX1. DDB1 may recruit specific substrate targeting subunits to the DCX complex. These substrate targeting subunits are generally known as DCAF (DDB1- and CUL4-associated factor) or CDW (CUL4-DDB1-associated WD40-repeat) proteins. Interacts with Fbw5 and gig. May interact with ohgt.

It localises to the cytoplasm. The protein localises to the nucleus. It functions in the pathway protein modification; protein ubiquitination. In terms of biological role, protein, which is both involved in DNA repair and protein ubiquitination, as part of the UV-DDB complex and DCX (DDB1-CUL4-X-box) complexes, respectively. Core component of the UV-DDB complex (UV-damaged DNA-binding protein complex), a complex that recognizes UV-induced DNA damage and recruit proteins of the nucleotide excision repair pathway (the NER pathway) to initiate DNA repair. The UV-DDB complex preferentially binds to cyclobutane pyrimidine dimers (CPD), 6-4 photoproducts (6-4 PP), apurinic sites and short mismatches. Also functions as a component of numerous distinct DCX (DDB1-CUL4-X-box) E3 ubiquitin-protein ligase complexes which mediate the ubiquitination and subsequent proteasomal degradation of target proteins. The functional specificity of the DCX E3 ubiquitin-protein ligase complex is determined by the variable substrate recognition component recruited by DDB1. Required for degradation of gig. Required for genomic stability in the face of endogenous DNA lesions and for the response to MMS-induced DNA damage. Required for normal wing development. The polypeptide is DNA damage-binding protein 1 (pic) (Drosophila melanogaster (Fruit fly)).